A 418-amino-acid chain; its full sequence is Tyrosine--tRNA ligase (418 aa).

Tyrosine 34 serves as a coordination point for L-tyrosine. Residues 39-48 (PTGDSMHIGH) carry the 'HIGH' region motif. Residues tyrosine 166 and glutamine 170 each coordinate L-tyrosine. The 'KMSKS' region motif lies at 228–232 (KFGKT). Lysine 231 is a binding site for ATP. Positions 350 to 418 (QNIVLWLVDA…KKRYFLAHVK (69 aa)) constitute an S4 RNA-binding domain.

It belongs to the class-I aminoacyl-tRNA synthetase family. TyrS type 1 subfamily. In terms of assembly, homodimer.

It localises to the cytoplasm. It catalyses the reaction tRNA(Tyr) + L-tyrosine + ATP = L-tyrosyl-tRNA(Tyr) + AMP + diphosphate + H(+). In terms of biological role, catalyzes the attachment of tyrosine to tRNA(Tyr) in a two-step reaction: tyrosine is first activated by ATP to form Tyr-AMP and then transferred to the acceptor end of tRNA(Tyr). The sequence is that of Tyrosine--tRNA ligase from Lactiplantibacillus plantarum (strain ATCC BAA-793 / NCIMB 8826 / WCFS1) (Lactobacillus plantarum).